A 204-amino-acid polypeptide reads, in one-letter code: Peptidyl-tRNA hydrolase (204 aa).

Position 14 (tyrosine 14) interacts with tRNA. Histidine 19 serves as the catalytic Proton acceptor. The tRNA site is built by phenylalanine 64, asparagine 66, and asparagine 112.

This sequence belongs to the PTH family. As to quaternary structure, monomer.

The protein resides in the cytoplasm. The enzyme catalyses an N-acyl-L-alpha-aminoacyl-tRNA + H2O = an N-acyl-L-amino acid + a tRNA + H(+). Hydrolyzes ribosome-free peptidyl-tRNAs (with 1 or more amino acids incorporated), which drop off the ribosome during protein synthesis, or as a result of ribosome stalling. Functionally, catalyzes the release of premature peptidyl moieties from peptidyl-tRNA molecules trapped in stalled 50S ribosomal subunits, and thus maintains levels of free tRNAs and 50S ribosomes. The chain is Peptidyl-tRNA hydrolase from Azorhizobium caulinodans (strain ATCC 43989 / DSM 5975 / JCM 20966 / LMG 6465 / NBRC 14845 / NCIMB 13405 / ORS 571).